The following is a 156-amino-acid chain: 6,7-dimethyl-8-ribityllumazine synthase (156 aa).

5-amino-6-(D-ribitylamino)uracil is bound by residues Phe-22, 57–59, and 81–83; these read AVE and SVI. Position 86–87 (86–87) interacts with (2S)-2-hydroxy-3-oxobutyl phosphate; sequence GT. His-89 functions as the Proton donor in the catalytic mechanism. Phe-114 serves as a coordination point for 5-amino-6-(D-ribitylamino)uracil. Position 128 (Arg-128) interacts with (2S)-2-hydroxy-3-oxobutyl phosphate.

This sequence belongs to the DMRL synthase family. Forms an icosahedral capsid composed of 60 subunits, arranged as a dodecamer of pentamers.

It carries out the reaction (2S)-2-hydroxy-3-oxobutyl phosphate + 5-amino-6-(D-ribitylamino)uracil = 6,7-dimethyl-8-(1-D-ribityl)lumazine + phosphate + 2 H2O + H(+). It participates in cofactor biosynthesis; riboflavin biosynthesis; riboflavin from 2-hydroxy-3-oxobutyl phosphate and 5-amino-6-(D-ribitylamino)uracil: step 1/2. Catalyzes the formation of 6,7-dimethyl-8-ribityllumazine by condensation of 5-amino-6-(D-ribitylamino)uracil with 3,4-dihydroxy-2-butanone 4-phosphate. This is the penultimate step in the biosynthesis of riboflavin. The chain is 6,7-dimethyl-8-ribityllumazine synthase from Aliivibrio fischeri (strain ATCC 700601 / ES114) (Vibrio fischeri).